The primary structure comprises 325 residues: ATPase GET3 (325 aa).

34–41 contributes to the ATP binding site; that stretch reads KGGVGKTT. The active site involves aspartate 63. Residues glutamate 243 and asparagine 270 each contribute to the ATP site. Positions 281 and 284 each coordinate Zn(2+).

The protein belongs to the arsA ATPase family. In terms of assembly, homodimer.

It localises to the cytoplasm. The protein resides in the endoplasmic reticulum. ATPase required for the post-translational delivery of tail-anchored (TA) proteins to the endoplasmic reticulum. Recognizes and selectively binds the transmembrane domain of TA proteins in the cytosol. This complex then targets to the endoplasmic reticulum by membrane-bound receptors, where the tail-anchored protein is released for insertion. This process is regulated by ATP binding and hydrolysis. ATP binding drives the homodimer towards the closed dimer state, facilitating recognition of newly synthesized TA membrane proteins. ATP hydrolysis is required for insertion. Subsequently, the homodimer reverts towards the open dimer state, lowering its affinity for the membrane-bound receptor, and returning it to the cytosol to initiate a new round of targeting. This Coccidioides posadasii (strain C735) (Valley fever fungus) protein is ATPase GET3.